The following is a 600-amino-acid chain: Keratin, type II cuticular Hb4 (600 aa).

The segment at 1 to 165 (MSCRSYRVSS…PNAQRVKKDE (165 aa)) is head. Residues 165-476 (EKEQIKTLNN…RLLEGEESRL (312 aa)) enclose the IF rod domain. The segment at 166–200 (KEQIKTLNNKFASFIDKVRFLEQQNKLLETKWSFL) is coil 1A. A linker 1 region spans residues 201-210 (QEQKCIRSNL). The segment at 211–311 (EPLFESYITN…YMEEIQLLQS (101 aa)) is coil 1B. The segment at 312-328 (HISETSVIVKMDNSRDL) is linker 12. Residues 329-472 (NLDGIIAEVK…ATYRRLLEGE (144 aa)) are coil 2. A tail region spans residues 473–600 (ESRLCEGVGP…STTTSCRTKY (128 aa)).

Belongs to the intermediate filament family. As to quaternary structure, heterotetramer of two type I and two type II keratins. As to expression, expressed in the hair follicles.

The polypeptide is Keratin, type II cuticular Hb4 (KRT84) (Homo sapiens (Human)).